The chain runs to 103 residues: Co-chaperonin GroES (103 aa).

The protein belongs to the GroES chaperonin family. Heptamer of 7 subunits arranged in a ring. Interacts with the chaperonin GroEL.

The protein localises to the cytoplasm. In terms of biological role, together with the chaperonin GroEL, plays an essential role in assisting protein folding. The GroEL-GroES system forms a nano-cage that allows encapsulation of the non-native substrate proteins and provides a physical environment optimized to promote and accelerate protein folding. GroES binds to the apical surface of the GroEL ring, thereby capping the opening of the GroEL channel. This is Co-chaperonin GroES from Prochlorococcus marinus (strain MIT 9211).